The chain runs to 207 residues: Thiamine-phosphate synthase (207 aa).

4-amino-2-methyl-5-(diphosphooxymethyl)pyrimidine-binding positions include 35–39 (QYRDK) and Asn-67. Asp-68 and Asp-86 together coordinate Mg(2+). Residue Thr-105 participates in 4-amino-2-methyl-5-(diphosphooxymethyl)pyrimidine binding. A 2-[(2R,5Z)-2-carboxy-4-methylthiazol-5(2H)-ylidene]ethyl phosphate-binding site is contributed by 132–134 (SVT). Lys-135 is a binding site for 4-amino-2-methyl-5-(diphosphooxymethyl)pyrimidine. Gly-162 is a 2-[(2R,5Z)-2-carboxy-4-methylthiazol-5(2H)-ylidene]ethyl phosphate binding site.

Belongs to the thiamine-phosphate synthase family. Requires Mg(2+) as cofactor.

It catalyses the reaction 2-[(2R,5Z)-2-carboxy-4-methylthiazol-5(2H)-ylidene]ethyl phosphate + 4-amino-2-methyl-5-(diphosphooxymethyl)pyrimidine + 2 H(+) = thiamine phosphate + CO2 + diphosphate. The catalysed reaction is 2-(2-carboxy-4-methylthiazol-5-yl)ethyl phosphate + 4-amino-2-methyl-5-(diphosphooxymethyl)pyrimidine + 2 H(+) = thiamine phosphate + CO2 + diphosphate. It carries out the reaction 4-methyl-5-(2-phosphooxyethyl)-thiazole + 4-amino-2-methyl-5-(diphosphooxymethyl)pyrimidine + H(+) = thiamine phosphate + diphosphate. Its pathway is cofactor biosynthesis; thiamine diphosphate biosynthesis; thiamine phosphate from 4-amino-2-methyl-5-diphosphomethylpyrimidine and 4-methyl-5-(2-phosphoethyl)-thiazole: step 1/1. Its function is as follows. Condenses 4-methyl-5-(beta-hydroxyethyl)thiazole monophosphate (THZ-P) and 2-methyl-4-amino-5-hydroxymethyl pyrimidine pyrophosphate (HMP-PP) to form thiamine monophosphate (TMP). The protein is Thiamine-phosphate synthase of Pseudomonas putida (strain GB-1).